A 1062-amino-acid polypeptide reads, in one-letter code: Carbamoyl phosphate synthase pyrimidine-specific large chain (1062 aa).

The segment at 1–401 (MGKREDIKKI…SLLKAVRSLE (401 aa)) is carboxyphosphate synthetic domain. Residues R129, R169, G175, G176, K208, I210, E215, G241, V242, H243, Q284, and E298 each contribute to the ATP site. An ATP-grasp 1 domain is found at 133–327 (RALMKELNEP…IAKIAAKIAV (195 aa)). Mg(2+) contacts are provided by Q284, E298, and N300. Mn(2+) contacts are provided by Q284, E298, and N300. The oligomerization domain stretch occupies residues 402 to 546 (AGVYHLDQPD…YGTYEEENES (145 aa)). Residues 547 to 929 (ERTDKKSILV…ALYKGLIASG (383 aa)) are carbamoyl phosphate synthetic domain. The ATP-grasp 2 domain maps to 671 to 861 (EQTLVELNIP…MANVATKVML (191 aa)). 10 residues coordinate ATP: R707, R746, L748, E752, G777, V778, H779, S780, Q820, and E832. Positions 820, 832, and 834 each coordinate Mg(2+). Residues Q820, E832, and N834 each contribute to the Mn(2+) site. The 133-residue stretch at 930-1062 (MSIPTHGSVL…FSAESMPVMQ (133 aa)) folds into the MGS-like domain. Residues 930 to 1062 (MSIPTHGSVL…FSAESMPVMQ (133 aa)) are allosteric domain.

This sequence belongs to the CarB family. Composed of two chains; the small (or glutamine) chain promotes the hydrolysis of glutamine to ammonia, which is used by the large (or ammonia) chain to synthesize carbamoyl phosphate. Tetramer of heterodimers (alpha,beta)4. The cofactor is Mg(2+). It depends on Mn(2+) as a cofactor.

The enzyme catalyses hydrogencarbonate + L-glutamine + 2 ATP + H2O = carbamoyl phosphate + L-glutamate + 2 ADP + phosphate + 2 H(+). It carries out the reaction hydrogencarbonate + NH4(+) + 2 ATP = carbamoyl phosphate + 2 ADP + phosphate + 2 H(+). It participates in amino-acid biosynthesis; L-arginine biosynthesis; carbamoyl phosphate from bicarbonate: step 1/1. Its pathway is pyrimidine metabolism; UMP biosynthesis via de novo pathway; (S)-dihydroorotate from bicarbonate: step 1/3. In terms of biological role, small subunit of the glutamine-dependent carbamoyl phosphate synthetase (CPSase). CPSase catalyzes the formation of carbamoyl phosphate from the ammonia moiety of glutamine, carbonate, and phosphate donated by ATP, constituting the first step of the biosynthetic pathway leading to pyrimidine nucleotides. The large subunit (synthetase) binds the substrates ammonia (free or transferred from glutamine from the small subunit), hydrogencarbonate and ATP and carries out an ATP-coupled ligase reaction, activating hydrogencarbonate by forming carboxy phosphate which reacts with ammonia to form carbamoyl phosphate. The protein is Carbamoyl phosphate synthase pyrimidine-specific large chain (pyrAB) of Halalkalibacterium halodurans (strain ATCC BAA-125 / DSM 18197 / FERM 7344 / JCM 9153 / C-125) (Bacillus halodurans).